Consider the following 78-residue polypeptide: Small ribosomal subunit protein bS16c (78 aa).

The protein belongs to the bacterial ribosomal protein bS16 family.

It is found in the plastid. The protein resides in the chloroplast. In Panax ginseng (Korean ginseng), this protein is Small ribosomal subunit protein bS16c.